Here is a 145-residue protein sequence, read N- to C-terminus: D-aminoacyl-tRNA deacylase (145 aa).

Residues G137–P138 carry the Gly-cisPro motif, important for rejection of L-amino acids motif.

Belongs to the DTD family. In terms of assembly, homodimer.

It localises to the cytoplasm. It carries out the reaction glycyl-tRNA(Ala) + H2O = tRNA(Ala) + glycine + H(+). It catalyses the reaction a D-aminoacyl-tRNA + H2O = a tRNA + a D-alpha-amino acid + H(+). Its function is as follows. An aminoacyl-tRNA editing enzyme that deacylates mischarged D-aminoacyl-tRNAs. Also deacylates mischarged glycyl-tRNA(Ala), protecting cells against glycine mischarging by AlaRS. Acts via tRNA-based rather than protein-based catalysis; rejects L-amino acids rather than detecting D-amino acids in the active site. By recycling D-aminoacyl-tRNA to D-amino acids and free tRNA molecules, this enzyme counteracts the toxicity associated with the formation of D-aminoacyl-tRNA entities in vivo and helps enforce protein L-homochirality. This chain is D-aminoacyl-tRNA deacylase, found in Yersinia enterocolitica serotype O:8 / biotype 1B (strain NCTC 13174 / 8081).